We begin with the raw amino-acid sequence, 945 residues long: Valine--tRNA ligase (945 aa).

The 'HIGH' region motif lies at 42 to 52; that stretch reads PNVTGTLHMGH. Positions 552 to 556 match the 'KMSKS' region motif; it reads KMSKS. Residue Lys555 coordinates ATP. The stretch at 879–945 forms a coiled coil; sequence DKAAETARLS…VQNQLAKLKD (67 aa).

Belongs to the class-I aminoacyl-tRNA synthetase family. ValS type 1 subfamily. In terms of assembly, monomer.

It is found in the cytoplasm. The catalysed reaction is tRNA(Val) + L-valine + ATP = L-valyl-tRNA(Val) + AMP + diphosphate. In terms of biological role, catalyzes the attachment of valine to tRNA(Val). As ValRS can inadvertently accommodate and process structurally similar amino acids such as threonine, to avoid such errors, it has a 'posttransfer' editing activity that hydrolyzes mischarged Thr-tRNA(Val) in a tRNA-dependent manner. The protein is Valine--tRNA ligase of Neisseria meningitidis serogroup B (strain ATCC BAA-335 / MC58).